Reading from the N-terminus, the 365-residue chain is 3-isopropylmalate dehydrogenase (365 aa).

80–93 (GPKWADNTGDQRPE) lines the NAD(+) pocket. Arg100, Arg110, Arg138, and Asp223 together coordinate substrate. Asp223, Asp247, and Asp251 together coordinate Mg(2+). 280–292 (GSAPDIAGQDVAN) serves as a coordination point for NAD(+). A disordered region spans residues 337-365 (NEEDASTSAFGREVATRAADSVPQNAPTP).

It belongs to the isocitrate and isopropylmalate dehydrogenases family. LeuB type 1 subfamily. As to quaternary structure, homodimer. Mg(2+) is required as a cofactor. The cofactor is Mn(2+).

The protein localises to the cytoplasm. The enzyme catalyses (2R,3S)-3-isopropylmalate + NAD(+) = 4-methyl-2-oxopentanoate + CO2 + NADH. Its pathway is amino-acid biosynthesis; L-leucine biosynthesis; L-leucine from 3-methyl-2-oxobutanoate: step 3/4. Catalyzes the oxidation of 3-carboxy-2-hydroxy-4-methylpentanoate (3-isopropylmalate) to 3-carboxy-4-methyl-2-oxopentanoate. The product decarboxylates to 4-methyl-2 oxopentanoate. The sequence is that of 3-isopropylmalate dehydrogenase from Salinibacter ruber (strain DSM 13855 / M31).